The chain runs to 344 residues: Anthranilate phosphoribosyltransferase (344 aa).

Residues glycine 80, 83–84 (GD), threonine 88, 90–93 (NVST), 108–116 (KHGNRSVSS), and serine 120 contribute to the 5-phospho-alpha-D-ribose 1-diphosphate site. Glycine 80 contacts anthranilate. Serine 92 contacts Mg(2+). Asparagine 111 is a binding site for anthranilate. Arginine 166 contributes to the anthranilate binding site. The Mg(2+) site is built by aspartate 225 and glutamate 226.

It belongs to the anthranilate phosphoribosyltransferase family. In terms of assembly, homodimer. Requires Mg(2+) as cofactor.

It carries out the reaction N-(5-phospho-beta-D-ribosyl)anthranilate + diphosphate = 5-phospho-alpha-D-ribose 1-diphosphate + anthranilate. It functions in the pathway amino-acid biosynthesis; L-tryptophan biosynthesis; L-tryptophan from chorismate: step 2/5. In terms of biological role, catalyzes the transfer of the phosphoribosyl group of 5-phosphorylribose-1-pyrophosphate (PRPP) to anthranilate to yield N-(5'-phosphoribosyl)-anthranilate (PRA). The chain is Anthranilate phosphoribosyltransferase from Legionella pneumophila (strain Paris).